The following is a 705-amino-acid chain: Lethal(3)malignant brain tumor-like protein 2 (705 aa).

Residues 1–84 (MEKPPSIEET…GTPRSLDGSG (84 aa)) are disordered. Ser13 carries the post-translational modification Phosphoserine. Acidic residues predominate over residues 15–25 (PMEEEEDDDLE). Low complexity predominate over residues 38–49 (SSVGSESSSYLE). A compositionally biased stretch (acidic residues) spans 50 to 60 (ESSEAENEDRE). Ser67 carries the post-translational modification Phosphoserine. Residue Thr76 is modified to Phosphothreonine. An FCS-type zinc finger spans residues 81–116 (DGSGSEPAVCEMCGIVGTREAFFSKTKRFCSVSCSR). Residues Cys90, Cys93, Cys110, and Cys114 each contribute to the Zn(2+) site. 4 MBT repeats span residues 179 to 283 (FDWG…LVPP), 291 to 391 (TDWK…IKMS), 397 to 500 (MAHH…LTPP), and 508 to 604 (FNWE…LQPP). The residue at position 338 (Ser338) is a Phosphoserine. A Glycyl lysine isopeptide (Lys-Gly) (interchain with G-Cter in SUMO2) cross-link involves residue Lys405. The tract at residues 608 to 705 (EPATPLKAKE…VENIKQETDD (98 aa)) is disordered. Residues 619–634 (TKKKKKQFGKKRKRIP) show a composition bias toward basic residues. Residues Lys647, Lys659, and Lys675 each participate in a glycyl lysine isopeptide (Lys-Gly) (interchain with G-Cter in SUMO2) cross-link. Ser683, Ser688, and Ser689 each carry phosphoserine. Lys700 participates in a covalent cross-link: Glycyl lysine isopeptide (Lys-Gly) (interchain with G-Cter in SUMO1); alternate. Lys700 is covalently cross-linked (Glycyl lysine isopeptide (Lys-Gly) (interchain with G-Cter in SUMO2); alternate).

Part of the E2F6.com-1 complex in G0 phase composed of E2F6, MGA, MAX, TFDP1, CBX3, BAT8, EUHMTASE1, RING1, RNF2, MBLR, BAT8 and YAF2.

It localises to the nucleus. Putative Polycomb group (PcG) protein. PcG proteins maintain the transcriptionally repressive state of genes, probably via a modification of chromatin, rendering it heritably changed in its expressibility. Its association with a chromatin-remodeling complex suggests that it may contribute to prevent expression of genes that trigger the cell into mitosis. Binds to monomethylated and dimethylated 'Lys-20' on histone H4. Binds histone H3 peptides that are monomethylated or dimethylated on 'Lys-4', 'Lys-9' or 'Lys-27'. This chain is Lethal(3)malignant brain tumor-like protein 2 (L3MBTL2), found in Pongo abelii (Sumatran orangutan).